Here is a 162-residue protein sequence, read N- to C-terminus: SsrA-binding protein (162 aa).

The protein belongs to the SmpB family.

The protein resides in the cytoplasm. In terms of biological role, required for rescue of stalled ribosomes mediated by trans-translation. Binds to transfer-messenger RNA (tmRNA), required for stable association of tmRNA with ribosomes. tmRNA and SmpB together mimic tRNA shape, replacing the anticodon stem-loop with SmpB. tmRNA is encoded by the ssrA gene; the 2 termini fold to resemble tRNA(Ala) and it encodes a 'tag peptide', a short internal open reading frame. During trans-translation Ala-aminoacylated tmRNA acts like a tRNA, entering the A-site of stalled ribosomes, displacing the stalled mRNA. The ribosome then switches to translate the ORF on the tmRNA; the nascent peptide is terminated with the 'tag peptide' encoded by the tmRNA and targeted for degradation. The ribosome is freed to recommence translation, which seems to be the essential function of trans-translation. This chain is SsrA-binding protein, found in Shewanella frigidimarina (strain NCIMB 400).